Here is a 241-residue protein sequence, read N- to C-terminus: Small ribosomal subunit protein uS2 (241 aa).

The protein belongs to the universal ribosomal protein uS2 family.

This chain is Small ribosomal subunit protein uS2, found in Shigella flexneri serotype 5b (strain 8401).